We begin with the raw amino-acid sequence, 141 residues long: Hemoglobin subunit alpha-D (141 aa).

The Globin domain maps to 1–141 (MLTAEDKKLI…VAAVLAEKYR (141 aa)). Heme b-binding residues include His-58 and His-87.

The protein belongs to the globin family. Heterotetramer of two alpha-D chains and two beta chains. Red blood cells.

Involved in oxygen transport from the lung to the various peripheral tissues. The sequence is that of Hemoglobin subunit alpha-D (HBAD) from Apus apus (Common swift).